A 465-amino-acid polypeptide reads, in one-letter code: UDP-N-acetylmuramate--L-alanine ligase (465 aa).

112–118 (GTHGKTT) lines the ATP pocket.

Belongs to the MurCDEF family.

The protein resides in the cytoplasm. It carries out the reaction UDP-N-acetyl-alpha-D-muramate + L-alanine + ATP = UDP-N-acetyl-alpha-D-muramoyl-L-alanine + ADP + phosphate + H(+). It functions in the pathway cell wall biogenesis; peptidoglycan biosynthesis. Its function is as follows. Cell wall formation. This chain is UDP-N-acetylmuramate--L-alanine ligase, found in Burkholderia vietnamiensis (strain G4 / LMG 22486) (Burkholderia cepacia (strain R1808)).